A 343-amino-acid chain; its full sequence is Vancomycin C-type resistance protein VanC1 (343 aa).

Residues 134–336 (HQLADTMGIA…YEILVEQLIA (203 aa)) enclose the ATP-grasp domain. 164–219 (IQDHGFPIFIKPNEAGSSKGITKVTDKTALQSALTTAFAYGSTVLIQKAIAGIEIG) serves as a coordination point for ATP. Mg(2+) contacts are provided by D290, E303, and N305. Residues D290, E303, and N305 each contribute to the Mn(2+) site.

It belongs to the D-alanine--D-alanine ligase family. It depends on Mg(2+) as a cofactor. Mn(2+) serves as cofactor.

It localises to the cell membrane. The catalysed reaction is D-serine + D-alanine + ATP = D-alanyl-D-serine + ADP + phosphate + H(+). In terms of biological role, D-alanine--D-alanine ligase of altered specificity, which catalyzes synthesis of D-Ala-D-Ser; produces a peptidoglycan which does not terminate in D-alanine but in D-serine, thus probably reducing affinity for vancomycin. Together with VanT and VanXYC, required for vancomycin resistance in E.gallinarum strain BM4174. In Enterococcus gallinarum, this protein is Vancomycin C-type resistance protein VanC1.